The primary structure comprises 111 residues: Nucleoid-associated protein NMA1657 (111 aa).

The protein belongs to the YbaB/EbfC family. Homodimer.

It is found in the cytoplasm. Its subcellular location is the nucleoid. In terms of biological role, binds to DNA and alters its conformation. May be involved in regulation of gene expression, nucleoid organization and DNA protection. In Neisseria meningitidis serogroup A / serotype 4A (strain DSM 15465 / Z2491), this protein is Nucleoid-associated protein NMA1657.